The primary structure comprises 258 residues: Eukaryotic translation initiation factor 3 subunit J (258 aa).

Over residues 1-11 (MAAAAAAAGDS) the composition is skewed to low complexity. Residues 1 to 108 (MAAAAAAAGD…LEEPEEPKVL (108 aa)) form a disordered region. Ala-2 carries the N-acetylalanine modification. Positions 2–69 (AAAAAAAGDS…KEEAEVKPEV (68 aa)) are sufficient for interaction with EIF3B. A phosphoserine mark is found at Ser-11, Ser-13, and Ser-20. Residues 40–59 (EGEDEDEDVKDNWDDDDDEK) show a composition bias toward acidic residues. Residues 60 to 106 (KEEAEVKPEVKISEKKKIAEKIKEKERQQKKRQEEIKKRLEEPEEPK) show a composition bias toward basic and acidic residues. Residues 70 to 135 (KISEKKKIAE…ESDLELAKET (66 aa)) are a coiled coil. A Glycyl lysine isopeptide (Lys-Gly) (interchain with G-Cter in SUMO2) cross-link involves residue Lys-106. At Thr-109 the chain carries Phosphothreonine. Ser-127 is subject to Phosphoserine. The disordered stretch occupies residues 217–238 (SKAKKKKKGVVPGGGLKATMKD). The segment at 243 to 258 (YGGYDGGYVQDYEDFM) is promotes stable association with the 40S ribosome. Tyr-254 carries the phosphotyrosine modification.

Component of the eukaryotic translation initiation factor 3 (eIF-3) complex, which is composed of 13 subunits: EIF3A, EIF3B, EIF3C, EIF3D, EIF3E, EIF3F, EIF3G, EIF3H, EIF3I, EIF3J, EIF3K, EIF3L and EIF3M. The eIF-3 complex appears to include 3 stable modules: module A is composed of EIF3A, EIF3B, EIF3G and EIF3I; module B is composed of EIF3F, EIF3H, and EIF3M; and module C is composed of EIF3C, EIF3D, EIF3E, EIF3K and EIF3L. EIF3C of module C binds EIF3B of module A and EIF3H of module B, thereby linking the three modules. EIF3J is a labile subunit that binds to the eIF-3 complex via EIF3B. The eIF-3 complex interacts with RPS6KB1 under conditions of nutrient depletion. Mitogenic stimulation leads to binding and activation of a complex composed of MTOR and RPTOR, leading to phosphorylation and release of RPS6KB1 and binding of EIF4B to eIF-3. Phosphorylated. Phosphorylation is enhanced upon serum stimulation.

It localises to the cytoplasm. In terms of biological role, component of the eukaryotic translation initiation factor 3 (eIF-3) complex, which is required for several steps in the initiation of protein synthesis. The eIF-3 complex associates with the 40S ribosome and facilitates the recruitment of eIF-1, eIF-1A, eIF-2:GTP:methionyl-tRNAi and eIF-5 to form the 43S pre-initiation complex (43S PIC). The eIF-3 complex stimulates mRNA recruitment to the 43S PIC and scanning of the mRNA for AUG recognition. The eIF-3 complex is also required for disassembly and recycling of post-termination ribosomal complexes and subsequently prevents premature joining of the 40S and 60S ribosomal subunits prior to initiation. The eIF-3 complex specifically targets and initiates translation of a subset of mRNAs involved in cell proliferation, including cell cycling, differentiation and apoptosis, and uses different modes of RNA stem-loop binding to exert either translational activation or repression. This chain is Eukaryotic translation initiation factor 3 subunit J, found in Homo sapiens (Human).